The primary structure comprises 520 residues: Macrophage receptor MARCO (520 aa).

At 1-43 (MRNKKILKEDELLSETQQAAFHQIAMEPFEINVPKPKRRNGVN) the chain is on the cytoplasmic side. A helical; Signal-anchor for type II membrane protein transmembrane segment spans residues 44–64 (FSLAVVVIYLILLTAGAGLLV). Topologically, residues 65–520 (VQVLNLQARL…EEDAGVECSV (456 aa)) are extracellular. Residues N83 and N136 are each glycosylated (N-linked (GlcNAc...) asparagine). Residues 142–423 (GMFRIKGEQG…KGERGENSVS (282 aa)) are disordered. A Collagen-like domain is found at 147 to 419 (KGEQGAPGLQ…VKGEKGERGE (273 aa)). 3 stretches are compositionally biased toward low complexity: residues 203–227 (EAGL…PQGE), 290–345 (LAGF…PGAT), and 380–398 (SPGL…QKGD). The segment covering 410–419 (VKGEKGERGE) has biased composition (basic and acidic residues). Residues 424-519 (VRIVGSSNRG…HEEDAGVECS (96 aa)) form the SRCR domain. 3 cysteine pairs are disulfide-bonded: C447–C508, C460–C518, and C488–C498.

As to quaternary structure, homotrimer; disulfide-linked. Trimers may assemble in larger oligomers thus resulting in the creation of a large surface capable of interacting with very large ligands. Post-translationally, N-glycosylated. Expressed in alveolar macrophages (at protein level). Detected in macrophages from various tissues including thymus, kidney, Kupffer cells of liver, and spleen.

The protein localises to the cell membrane. Functionally, pattern recognition receptor (PRR) which binds Gram-positive and Gram-negative bacteria. Also plays a role in binding of unopsonized particles by alveolar macrophages. Binds to the secretoglobin SCGB3A2. In Homo sapiens (Human), this protein is Macrophage receptor MARCO (MARCO).